Consider the following 935-residue polypeptide: MTDYKDTLNLPETGFPMRGDLAKREPAMLKNWYDKNLYQQIRQTSKGKKTFILHDGPPYANGNLHLGHAVNKILKDIIMKSKTASGFDTPYVPGWDCHGLPIELKVESIVGKPNEKISAAEFRQACREYANEQVDRQKADFIRMGVLGDWDNPYLTMNFNTEASIIRTLAKVIANGHLYKGSKPVHWCLDCGSSLAEAEVEYEDKVSPSIYVRFKACDETAIETLFNAKGNGPISAIIWTTTPWTMPSNRAIAIHPELEYALVQLADERVILATELVESVAKAIEAESFDILATVKGETLQLLRFHHPFYAFDVPFIFGDHVTTEGGTGLVHTAPDHGTDDFIIARKNNIEMAGLIGNDGKFKSDVEFFAGLAVFESNEKVIEKLKETGALLKLARIKHSYPHCWRHKTPIIFRATPQWFIGMEKQGLRAQALAEIKTVRWIPNWGEARIDTMVANRPDWCISRQRTWGVPMAMFVHNETEELHPRTLDILELVAQRVEQQGIQAWWDLDPTEVLGEDAQHYHKVPDTLDVWFDSGSTYASVVEQRPEFNGQTADMYLEGSDQHRGWFMSSLMLASATNGKAPYQQVLTHGFVVDEKGRKMSKSIGNVIVPSEVWNKNGADILRLWVASTDYTAEMKVSHGILNSAGDAYRRIRNTARFLLSNLNGFIPARDEVKPNEMIALDRWAVSCALEAQNDIIEAYEHYQFHTVVQRLMRFCSIEMGSFYLDIIKDRQYTTKADSLARRSCQTALWHIAEALVRWIAPILSFTADEIWSHLPTVEGRSEFVFTEQFYSQLFTLNCHDKLDDNYWQQLINIRAEVNRVLEQARNEKTIGAGLEAKVTVYANDEMLPLLHQLGNELRFVLITSQAIVKPLSEADVAEGELAGLAVKVERAEGEKCPRCWHFATDIGTHAEHNAICGRCVENVAGKGEVRRFA.

A 'HIGH' region motif is present at residues 58–68 (PYANGNLHLGH). Residue glutamate 559 participates in L-isoleucyl-5'-AMP binding. The short motif at 600–604 (KMSKS) is the 'KMSKS' region element. Lysine 603 is a binding site for ATP. 4 residues coordinate Zn(2+): cysteine 898, cysteine 901, cysteine 918, and cysteine 921.

It belongs to the class-I aminoacyl-tRNA synthetase family. IleS type 1 subfamily. In terms of assembly, monomer. Requires Zn(2+) as cofactor.

It localises to the cytoplasm. The enzyme catalyses tRNA(Ile) + L-isoleucine + ATP = L-isoleucyl-tRNA(Ile) + AMP + diphosphate. Functionally, catalyzes the attachment of isoleucine to tRNA(Ile). As IleRS can inadvertently accommodate and process structurally similar amino acids such as valine, to avoid such errors it has two additional distinct tRNA(Ile)-dependent editing activities. One activity is designated as 'pretransfer' editing and involves the hydrolysis of activated Val-AMP. The other activity is designated 'posttransfer' editing and involves deacylation of mischarged Val-tRNA(Ile). This chain is Isoleucine--tRNA ligase, found in Haemophilus ducreyi (strain 35000HP / ATCC 700724).